We begin with the raw amino-acid sequence, 657 residues long: MTQLAIGKPAPLGAHYDGQGVNFTLFSAHAERVELCVFDANGQEHRYDLPGNSGDIWHGYLPDARPGLRYGYRVHGPWQPAEGHRFNPAKLLIDPCARQIDGEFKDNPLLHAGHNEPDYRDNAAIAPKCVVVVDHYDWEDDAPPRTPWGSTIIYEAHVKGLTYLHPEIPVEIRGTYKALGHPVMINYLKQLGITALELLPVAQFASEPRLQRMGLSNYWGYNPVAMFALHPAYACSPETALDEFRDAIKALHKAGIEVILDIVLNHSAELDLDGPLFSLRGIDNRSYYWIREDGDYHNWTGCGNTLNLSHPAVVDYASACLRYWVETCHVDGFRFDLAAVMGRTPEFRQDAPLFTAIQNCPVLSQVKLIAEPWDIAPSGYQVGNFPPLFAEWNDHFRDAARRFWLHYDLPLGAFAGRFAASSDVFKRNGRLPSAAINLVTAHDGFTLRDCVCFNHKHNEANGEENRDGTNNNYSNNHGKEGLGGTLDLVERRRDSIHALLTTLLLSQGTPMLLAGDEHGHSQHGNNNAYCQDNQLNWLDWSQASSGLTAFTAALIHLRKRIPALVENRWWEEGDGNVRWLNRYAQPLSTDEWQNGPKQLQILLSDRFLIAINATLEVTEIVLPAGEWHAIPPFAGEDNPVITVVWQGPAHGLCVFQR.

Asp336 acts as the Nucleophile in catalysis. Glu371 (proton donor) is an active-site residue. The tract at residues 460–479 (ANGEENRDGTNNNYSNNHGK) is disordered.

The protein belongs to the glycosyl hydrolase 13 family.

It catalyses the reaction Hydrolysis of (1-&gt;6)-alpha-D-glucosidic linkages to branches with degrees of polymerization of three or four glucose residues in limit dextrin.. The protein operates within glycan degradation; glycogen degradation. In terms of biological role, removes maltotriose and maltotetraose chains that are attached by 1,6-alpha-linkage to the limit dextrin main chain, generating a debranched limit dextrin. This is Glycogen debranching enzyme from Shigella flexneri serotype 5b (strain 8401).